Reading from the N-terminus, the 220-residue chain is Deoxyribose-phosphate aldolase 2 (220 aa).

The Proton donor/acceptor role is filled by aspartate 89. Lysine 151 acts as the Schiff-base intermediate with acetaldehyde in catalysis. The Proton donor/acceptor role is filled by lysine 180.

Belongs to the DeoC/FbaB aldolase family. DeoC type 1 subfamily.

The protein resides in the cytoplasm. The catalysed reaction is 2-deoxy-D-ribose 5-phosphate = D-glyceraldehyde 3-phosphate + acetaldehyde. It participates in carbohydrate degradation; 2-deoxy-D-ribose 1-phosphate degradation; D-glyceraldehyde 3-phosphate and acetaldehyde from 2-deoxy-alpha-D-ribose 1-phosphate: step 2/2. In terms of biological role, catalyzes a reversible aldol reaction between acetaldehyde and D-glyceraldehyde 3-phosphate to generate 2-deoxy-D-ribose 5-phosphate. This chain is Deoxyribose-phosphate aldolase 2, found in Staphylococcus aureus (strain N315).